Consider the following 176-residue polypeptide: NAD(P)H-quinone oxidoreductase subunit I, chloroplastic (176 aa).

2 consecutive 4Fe-4S ferredoxin-type domains span residues 55–84 and 95–124; these read GRIH…VNWE and QTYS…MTEE. The [4Fe-4S] cluster site is built by C64, C67, C70, C74, C104, C107, C110, and C114.

It belongs to the complex I 23 kDa subunit family. As to quaternary structure, NDH is composed of at least 16 different subunits, 5 of which are encoded in the nucleus. [4Fe-4S] cluster is required as a cofactor.

Its subcellular location is the plastid. The protein resides in the chloroplast thylakoid membrane. The catalysed reaction is a plastoquinone + NADH + (n+1) H(+)(in) = a plastoquinol + NAD(+) + n H(+)(out). The enzyme catalyses a plastoquinone + NADPH + (n+1) H(+)(in) = a plastoquinol + NADP(+) + n H(+)(out). Its function is as follows. NDH shuttles electrons from NAD(P)H:plastoquinone, via FMN and iron-sulfur (Fe-S) centers, to quinones in the photosynthetic chain and possibly in a chloroplast respiratory chain. The immediate electron acceptor for the enzyme in this species is believed to be plastoquinone. Couples the redox reaction to proton translocation, and thus conserves the redox energy in a proton gradient. This is NAD(P)H-quinone oxidoreductase subunit I, chloroplastic from Mesostigma viride (Green alga).